The following is a 451-amino-acid chain: uncharacterized protein (451 aa).

One can recognise a TRAM domain in the interval 2–60 (NLKVKQKIPLKIKRMGINGEGIGFYQKTLVFVPGALKGEDIYCQITSIRRNFVEAKLLK). Residues Cys73, Cys79, Cys82, and Cys162 each contribute to the [4Fe-4S] cluster site. S-adenosyl-L-methionine-binding residues include Gln283, Tyr312, Asp333, and Asp381. The Nucleophile role is filled by Cys408.

This sequence belongs to the class I-like SAM-binding methyltransferase superfamily. RNA M5U methyltransferase family.

This is an uncharacterized protein from Streptococcus pneumoniae serotype 4 (strain ATCC BAA-334 / TIGR4).